We begin with the raw amino-acid sequence, 244 residues long: NAD(P)H-quinone oxidoreductase subunit K (244 aa).

Residues Cys60, Cys61, Cys125, and Cys156 each contribute to the [4Fe-4S] cluster site. Residues 221-236 (SKKEKITELPENREQT) show a composition bias toward basic and acidic residues. The segment at 221–244 (SKKEKITELPENREQTEIINSEEE) is disordered.

The protein belongs to the complex I 20 kDa subunit family. As to quaternary structure, NDH-1 can be composed of about 15 different subunits; different subcomplexes with different compositions have been identified which probably have different functions. Requires [4Fe-4S] cluster as cofactor.

It is found in the cellular thylakoid membrane. It catalyses the reaction a plastoquinone + NADH + (n+1) H(+)(in) = a plastoquinol + NAD(+) + n H(+)(out). The enzyme catalyses a plastoquinone + NADPH + (n+1) H(+)(in) = a plastoquinol + NADP(+) + n H(+)(out). Functionally, NDH-1 shuttles electrons from an unknown electron donor, via FMN and iron-sulfur (Fe-S) centers, to quinones in the respiratory and/or the photosynthetic chain. The immediate electron acceptor for the enzyme in this species is believed to be plastoquinone. Couples the redox reaction to proton translocation, and thus conserves the redox energy in a proton gradient. Cyanobacterial NDH-1 also plays a role in inorganic carbon-concentration. The chain is NAD(P)H-quinone oxidoreductase subunit K from Prochlorococcus marinus (strain MIT 9312).